The following is a 2347-amino-acid chain: tRNA(Glu)-specific nuclease WapA (2347 aa).

The signal sequence occupies residues 1–45 (MSEYYFYYKRREKMKKRKRRNFKRFIAAFLVLALIISLVPADVLA). Residues 50 to 72 (EENGNRIVADDPEETLQKEQTEE) are disordered. YD repeat units lie at residues 1045–1078 (YNDK…ITGP), 1088–1116 (ENDL…LVKQ), 1649–1684 (YDET…LSNG), 1691–1729 (YDKE…PLGN), and 2095–2126 (YNAH…PTKT).

Belongs to the RHS/WapA nuclease family.

It is found in the secreted. The protein localises to the cell wall. Its function is as follows. Toxic component of a toxin-immunity protein module, which functions as a cellular contact-dependent growth inhibition (CDI) system. A site-specific tRNA(Glu) nuclease, the C-terminus (residues 2214-2346) probably removes 2 or 4 nucleotides from the 3' end of tRNA(Glu) but not tRNA2(Arg) or tRNA3(Ser) (upon expression in E.coli), possibly endonucleolytically. The nuclease activity is neutralized by expression of the cognate immunity protein WapI from the same strain, but not its homolog from 2 other B.subtilis strains. The C-terminus cannot be expressed on its own in E.coli, however it can be cloned in the presence of its cognate immunity protein gene wapI. Cell contact is probably necessary for growth inhibition. The protein is tRNA(Glu)-specific nuclease WapA (wapA) of Bacillus subtilis subsp. natto (strain BEST195).